A 275-amino-acid polypeptide reads, in one-letter code: Large ribosomal subunit protein uL2c (275 aa).

A disordered region spans residues 219–254; that stretch reads TVRGSVMNPCDHPHGGGEGRAPIGRTRPLTPWGKPA.

This sequence belongs to the universal ribosomal protein uL2 family. As to quaternary structure, part of the 50S ribosomal subunit.

Its subcellular location is the plastid. It is found in the chloroplast. The chain is Large ribosomal subunit protein uL2c (rpl2) from Phaeodactylum tricornutum (strain CCAP 1055/1).